Consider the following 260-residue polypeptide: UPF0246 protein APL_0602 (260 aa).

It belongs to the UPF0246 family.

The sequence is that of UPF0246 protein APL_0602 from Actinobacillus pleuropneumoniae serotype 5b (strain L20).